Here is a 912-residue protein sequence, read N- to C-terminus: Translation initiation factor IF-2 (912 aa).

The tract at residues 26–297 is disordered; the sequence is SDQGEFVKSA…RGRKSKRAKR (272 aa). A compositionally biased stretch (low complexity) spans 56 to 74; the sequence is KPAPAASNGAAAEAAAPPK. Over residues 100 to 120 the composition is skewed to pro residues; it reads APEPPAAPAAPAAPAPKPSPA. Residues 121–131 are compositionally biased toward low complexity; that stretch reads ARPAAAEAAAP. Composition is skewed to pro residues over residues 132 to 152, 173 to 183, and 192 to 218; these read APAP…PGAP, PRPQAPRPGAP, and NMPP…PGGG. A compositionally biased stretch (gly residues) spans 219-283; that stretch reads PRPGGAGRPG…GAAGAFGRPG (65 aa). Residues 287 to 296 are compositionally biased toward basic residues; sequence KRGRKSKRAK. One can recognise a tr-type G domain in the interval 408–579; that stretch reads TRPPVVTVMG…AVLLTADAAL (172 aa). The interval 417 to 424 is G1; it reads GHVDHGKT. 417-424 lines the GTP pocket; the sequence is GHVDHGKT. The G2 stretch occupies residues 442–446; that stretch reads GITQH. Residues 467–470 form a G3 region; it reads DTPG. GTP contacts are provided by residues 467–471 and 521–524; these read DTPGH and NKID. Residues 521-524 are G4; that stretch reads NKID. Residues 557–559 are G5; the sequence is SAR.

Belongs to the TRAFAC class translation factor GTPase superfamily. Classic translation factor GTPase family. IF-2 subfamily.

It is found in the cytoplasm. One of the essential components for the initiation of protein synthesis. Protects formylmethionyl-tRNA from spontaneous hydrolysis and promotes its binding to the 30S ribosomal subunits. Also involved in the hydrolysis of GTP during the formation of the 70S ribosomal complex. The sequence is that of Translation initiation factor IF-2 from Mycobacteroides abscessus (strain ATCC 19977 / DSM 44196 / CCUG 20993 / CIP 104536 / JCM 13569 / NCTC 13031 / TMC 1543 / L948) (Mycobacterium abscessus).